Here is a 139-residue protein sequence, read N- to C-terminus: Non-structural protein 1 (139 aa).

Residues 136–139 carry the DLNP; interaction with MAP1B motif; sequence DLNP.

This sequence belongs to the pneumovirus non-structural protein 1 family. In terms of assembly, monomer. Homomultimer. Heteromultimer with NS2. Interacts with the matrix protein M. Interacts with host ELOC and CUL2; this interaction allows NS1 to form an active E3 ligase with ELOC and CUL2. Interacts with host IRF3; this interaction leads to the disrupted association of IRF3 with CREBBP and thus reduced binding of IRF3 to the IFN-beta promoter. Interacts with host MAVS; this interaction prevents MAVS binding to RIGI and inhibits signaling pathway leading to interferon production. Interacts with host MAP1B/microtubule-associated protein 1B. Interacts with host TRIM25 (via SPRY domain); this interaction suppresses RIGI ubiquitination and results in decreased interaction between RIGI and MAVS.

It localises to the host cytoplasm. Its subcellular location is the host mitochondrion. It is found in the host nucleus. Plays a major role in antagonizing the type I IFN-mediated antiviral response by degrading or inhibiting multiple cellular factors required for either IFN induction or response pathways. Acts cooperatively with NS2 to repress activation and nuclear translocation of host IFN-regulatory factor IRF3. Also disrupts the association of IRF3 with CREBBP. Interacts with host mitochondrial-associated membrane (MAM) MAVS and prevents the interaction with RIGI. Interacts with TRIM25 to suppress TRIM25-mediated RIGI ubiquitination and thereby RIGI-MAVS interaction. Together with NS2, participates in the proteasomal degradation of host STAT2, IRF3, IRF7, TBK1 and RIGI through a NS-degradasome involving CUL2 and Elongin-C. The degradasome requires an intact mitochondrial MAVS. Decreases the levels of host TRAF3 and IKBKE/IKK-epsilon. As functions other than disruptions of the type I IFN-mediated antiviral signaling pathways, induces host SOCS1 and SOCS3 expression. Suppresses premature apoptosis by an NF-kappa-B-dependent, interferon-independent mechanism and thus facilitates virus growth. Additionally, NS1 may serve some inhibitory role in viral transcription and RNA replication. Suppresses proliferation and activation of host CD103+ CD8+ cytotoxic T-lymphocytes and Th17 helper T-lymphocytes. This Homo sapiens (Human) protein is Non-structural protein 1 (1C).